Here is a 494-residue protein sequence, read N- to C-terminus: Sulfate adenylyltransferase subunit 1 (494 aa).

In terms of domain architecture, tr-type G spans 24 to 240 (TRPLRLITCG…LELATVRSAQ (217 aa)). The tract at residues 33-40 (GSVDDGKS) is G1. Residue 33–40 (GSVDDGKS) coordinates GTP. The tract at residues 91–95 (GITID) is G2. The G3 stretch occupies residues 112–115 (DTPG). GTP contacts are provided by residues 112-116 (DTPGH) and 167-170 (NKID). Residues 167–170 (NKID) are G4. Residues 204–206 (SAL) form a G5 region.

Belongs to the TRAFAC class translation factor GTPase superfamily. Classic translation factor GTPase family. CysN/NodQ subfamily. As to quaternary structure, heterodimer composed of CysD, the smaller subunit, and CysN.

The enzyme catalyses sulfate + ATP + H(+) = adenosine 5'-phosphosulfate + diphosphate. Its pathway is sulfur metabolism; hydrogen sulfide biosynthesis; sulfite from sulfate: step 1/3. Functionally, with CysD forms the ATP sulfurylase (ATPS) that catalyzes the adenylation of sulfate producing adenosine 5'-phosphosulfate (APS) and diphosphate, the first enzymatic step in sulfur assimilation pathway. APS synthesis involves the formation of a high-energy phosphoric-sulfuric acid anhydride bond driven by GTP hydrolysis by CysN coupled to ATP hydrolysis by CysD. The chain is Sulfate adenylyltransferase subunit 1 from Rhizobium tropici.